A 1373-amino-acid polypeptide reads, in one-letter code: DNA-directed RNA polymerase subunit beta (1373 aa).

It belongs to the RNA polymerase beta chain family. As to quaternary structure, the RNAP catalytic core consists of 2 alpha, 1 beta, 1 beta' and 1 omega subunit. When a sigma factor is associated with the core the holoenzyme is formed, which can initiate transcription.

It carries out the reaction RNA(n) + a ribonucleoside 5'-triphosphate = RNA(n+1) + diphosphate. Functionally, DNA-dependent RNA polymerase catalyzes the transcription of DNA into RNA using the four ribonucleoside triphosphates as substrates. This Rhodopseudomonas palustris (strain BisB18) protein is DNA-directed RNA polymerase subunit beta.